The primary structure comprises 591 residues: L-fucose isomerase (591 aa).

Active-site proton acceptor residues include E337 and D361. Mn(2+) is bound by residues E337, D361, and H528.

This sequence belongs to the L-fucose isomerase family. In terms of assembly, homohexamer. It depends on Mn(2+) as a cofactor.

Its subcellular location is the cytoplasm. It carries out the reaction L-fucose = L-fuculose. Its pathway is carbohydrate degradation; L-fucose degradation; L-lactaldehyde and glycerone phosphate from L-fucose: step 1/3. Converts the aldose L-fucose into the corresponding ketose L-fuculose. The chain is L-fucose isomerase from Salmonella schwarzengrund (strain CVM19633).